Consider the following 340-residue polypeptide: Phenylalanine--tRNA ligase alpha subunit (340 aa).

Mg(2+) is bound at residue glutamate 255.

It belongs to the class-II aminoacyl-tRNA synthetase family. Phe-tRNA synthetase alpha subunit type 1 subfamily. In terms of assembly, tetramer of two alpha and two beta subunits. Requires Mg(2+) as cofactor.

It localises to the cytoplasm. The enzyme catalyses tRNA(Phe) + L-phenylalanine + ATP = L-phenylalanyl-tRNA(Phe) + AMP + diphosphate + H(+). The sequence is that of Phenylalanine--tRNA ligase alpha subunit from Desulfitobacterium hafniense (strain Y51).